A 1083-amino-acid polypeptide reads, in one-letter code: Ubiquitin carboxyl-terminal hydrolase 28 (1083 aa).

A disordered region spans residues 60–82; that stretch reads DQRVKEPSHDTAATEPSEVEESA. S67 carries the phosphoserine modification. The UIM domain maps to 97 to 116; it reads DNKDDLQAAIALSLLESPNI. K99 is covalently cross-linked (Glycyl lysine isopeptide (Lys-Gly) (interchain with G-Cter in SUMO2)). The USP domain maps to 162–656; the sequence is VGLKNVGNTC…SAYCLMYIND (495 aa). C171 (nucleophile) is an active-site residue. Position 376 is a phosphoserine (S376). Residues 483-539 are disordered; it reads DLTAKESSSPKSCSQNAEGSFSSPEDALPNSEVMNGPFTSPHSSLEMPAPPPAPRTV. The span at 487–505 shows a compositional bias: polar residues; that stretch reads KESSSPKSCSQNAEGSFSS. At S556 the chain carries Phosphoserine. Residue H606 is the Proton acceptor of the active site. The segment at 703-728 is disordered; the sequence is EEQSCKIPQMESSPNSSSQDFSTSQE. A compositionally biased stretch (low complexity) spans 714 to 728; sequence SSPNSSSQDFSTSQE. Residue S720 is modified to Phosphoserine. T1054 bears the Phosphothreonine mark.

Belongs to the peptidase C19 family. USP28 subfamily. In terms of assembly, interacts with ZNF304. Interacts with PRKD1. Interacts with TP53BP1. Interacts with FBXW7; following DNA damage, dissociates from FBXW7 leading to degradation of MYC. Post-translationally, degraded upon nickel ion level or hypoxia exposure. Phosphorylated upon DNA damage at Ser-67 and Ser-720, by ATM or ATR. Phosphorylated by PRKD1.

The protein resides in the nucleus. It is found in the nucleoplasm. It carries out the reaction Thiol-dependent hydrolysis of ester, thioester, amide, peptide and isopeptide bonds formed by the C-terminal Gly of ubiquitin (a 76-residue protein attached to proteins as an intracellular targeting signal).. Its function is as follows. Deubiquitinase involved in DNA damage response checkpoint and MYC proto-oncogene stability. Involved in DNA damage induced apoptosis by specifically deubiquitinating proteins of the DNA damage pathway such as CLSPN. Also involved in G2 DNA damage checkpoint, by deubiquitinating CLSPN, and preventing its degradation by the anaphase promoting complex/cyclosome (APC/C). In contrast, it does not deubiquitinate PLK1. Specifically deubiquitinates MYC in the nucleoplasm, leading to prevent MYC degradation by the proteasome: acts by specifically interacting with FBXW7 (FBW7alpha) in the nucleoplasm and counteracting ubiquitination of MYC by the SCF(FBXW7) complex. Deubiquitinates ZNF304, hence preventing ZNF304 degradation by the proteasome and leading to the activated KRAS-mediated promoter hypermethylation and transcriptional silencing of tumor suppressor genes (TSGs) in a subset of colorectal cancers (CRC) cells. The chain is Ubiquitin carboxyl-terminal hydrolase 28 (Usp28) from Rattus norvegicus (Rat).